Here is a 178-residue protein sequence, read N- to C-terminus: Inorganic pyrophosphatase (178 aa).

Substrate-binding residues include K30, R44, and Y56. Residues D66, D71, and D103 each contribute to the Mg(2+) site. Substrate is bound at residue Y142.

Belongs to the PPase family. In terms of assembly, homohexamer. Mg(2+) is required as a cofactor.

The protein localises to the cytoplasm. The enzyme catalyses diphosphate + H2O = 2 phosphate + H(+). Functionally, catalyzes the hydrolysis of inorganic pyrophosphate (PPi) forming two phosphate ions. The protein is Inorganic pyrophosphatase of Xanthomonas axonopodis pv. citri (strain 306).